The primary structure comprises 1069 residues: Acyl-CoA dehydrogenase family member 10 (1069 aa).

Lysine 413 carries the N6-succinyllysine modification. Lysine 427 is subject to N6-acetyllysine; alternate. The residue at position 427 (lysine 427) is an N6-succinyllysine; alternate. Residues 792–802 (FAMTEPQVASS), serine 828, arginine 943, glutamine 1013, and glutamate 1044 contribute to the FAD site. At lysine 1052 the chain carries N6-acetyllysine; alternate. The residue at position 1052 (lysine 1052) is an N6-succinyllysine; alternate.

It belongs to the acyl-CoA dehydrogenase family. Requires FAD as cofactor.

The catalysed reaction is a 2,3-saturated acyl-CoA + A = a 2,3-dehydroacyl-CoA + AH2. Acyl-CoA dehydrogenase only active with R- and S-2-methyl-C15-CoA. The chain is Acyl-CoA dehydrogenase family member 10 (Acad10) from Mus musculus (Mouse).